Reading from the N-terminus, the 431-residue chain is Indole diterpene prenyltransferase nodD1 (431 aa).

Residue 85 to 86 (FI) participates in L-tryptophan binding. Substrate-binding residues include Arg107, Lys194, Arg268, Lys270, Tyr272, and Tyr353.

This sequence belongs to the tryptophan dimethylallyltransferase family.

Its pathway is secondary metabolite biosynthesis. Functionally, indole diterpene prenyltransferase; part of the gene cluster that mediates the biosynthesis of the indole diterpenes nodulisporic acids (NA). Nodulisporic acid A (NAA) and its chemically modified derivatives are of particular significance because of their highly potent insecticidal activity against blood-feeding arthropods and lack of observable adverse effects on mammals, in particular the tremogenicity associated with the paspaline-derived IDTs is not observed. The geranylgeranyl diphosphate (GGPP) synthase ggs1, localized outside of the cluster, is proposed to catalyze the first step in nodulisporic acid biosynthesis via conversion of farnesyl pyrophosphate and isopentyl pyrophosphate into geranylgeranyl pyrophosphate (GGPP). Condensation of indole-3-glycerol phosphate with GGPP by the prenyl transferase nodC then forms 3-geranylgeranylindole (3-GGI). Epoxidation by the FAD-dependent monooxygenase nodM leads to a single-epoxidized-GGI that is substrate of the terpene cyclase nodB for cyclization to yield emindole SB. The terminal methyl carbon, C28, of emindole SB is then oxidized by the cytochrome P450 monooxygenase nodW to produce nodulisporic acid F (NAF), the pentacyclic core of NAA. NAF is converted to nodulisporic acid E (NAE) via prenylation. This step is probably performed by one of the indole diterpene prenyltransferases nodD1 or nodD2. Several oxidation steps performed by the FAD-linked oxidoreductase nodO and one of the cytochrome P450 monooxygenase nodR, nodX or nodZ further convert NAE to nodulisporic acid D (NAD). NAD is substrate of cytochrome P450 monooxygenase nodJ to produce the precursor of nodulisporic acid C (NAC), converted to NAC by one of the indole diterpene prenyltransferases nodD1 or nodD2. The FAD-dependent monooxygenase nodY2 then oxidizes NAC to nodulisporic acid B (NAB). Finally NAB is converted to NAA by one of the cytochrome P450 monooxygenases nodR, nodX or nodZ. This is Indole diterpene prenyltransferase nodD1 from Hypoxylon pulicicidum.